Here is a 656-residue protein sequence, read N- to C-terminus: Methionine--tRNA ligase (656 aa).

Residues 13 to 23 (YYPSGNLHIGH) carry the 'HIGH' region motif. Residues 308–312 (KMSKS) carry the 'KMSKS' region motif. An ATP-binding site is contributed by Lys311. The tRNA-binding domain occupies 556 to 656 (DFDKVEIKAA…SAIPNGAVIK (101 aa)).

This sequence belongs to the class-I aminoacyl-tRNA synthetase family. MetG type 2B subfamily. As to quaternary structure, homodimer.

Its subcellular location is the cytoplasm. It catalyses the reaction tRNA(Met) + L-methionine + ATP = L-methionyl-tRNA(Met) + AMP + diphosphate. In terms of biological role, is required not only for elongation of protein synthesis but also for the initiation of all mRNA translation through initiator tRNA(fMet) aminoacylation. This Staphylococcus epidermidis (strain ATCC 12228 / FDA PCI 1200) protein is Methionine--tRNA ligase.